The following is a 552-amino-acid chain: Hyaluronan synthase 2 (552 aa).

Residues 1 to 11 lie on the Cytoplasmic side of the membrane; that stretch reads MYCERFICILR. A helical membrane pass occupies residues 12–32; that stretch reads ILGTTLFGVSLLLGITAAYIV. Residues 33-45 lie on the Extracellular side of the membrane; the sequence is GYQFIQTDNYYFS. The helical transmembrane segment at 46–66 threads the bilayer; the sequence is FGLYGAILASHLIIQSLFAYL. At 67 to 374 the chain is on the cytoplasmic side; sequence EHRKMKRSLE…NAMWFHKHHL (308 aa). Residues 375-395 form a helical membrane-spanning segment; that stretch reads WMTYEAVITGFFPFFLIATVI. Residues 396–402 lie on the Extracellular side of the membrane; sequence QLFYRGK. A helical membrane pass occupies residues 403–423; the sequence is IWNILLFLLTVQLVGLIKSSF. At 424–429 the chain is on the cytoplasmic side; it reads ASFLRG. The helical transmembrane segment at 430–450 threads the bilayer; it reads NIVMVFMSLYSVLYMSSLLPA. At 451–475 the chain is on the extracellular side; the sequence is KMFAIATINKAGWGTSGRKTIVVNF. A helical transmembrane segment spans residues 476–496; sequence IGLIPVSIWFTILLGRVIFTI. Over 497–510 the chain is Cytoplasmic; that stretch reads YKESKKPFSESKTT. The helical transmembrane segment at 511 to 531 threads the bilayer; it reads VLVIGTILYACYWVLLLTLYL. The Extracellular segment spans residues 532-552; it reads VLITKCGRRKKEQHYDMVLDV.

This sequence belongs to the NodC/HAS family. As to quaternary structure, homodimer; dimerization promotes enzymatic activity. It depends on Mg(2+) as a cofactor.

Its subcellular location is the cell membrane. It is found in the endoplasmic reticulum membrane. The protein localises to the vesicle. The protein resides in the golgi apparatus membrane. It localises to the lysosome. The enzyme catalyses [hyaluronan](n) + UDP-N-acetyl-alpha-D-glucosamine = N-acetyl-beta-D-glucosaminyl-(1-&gt;4)-[hyaluronan](n) + UDP + H(+). It catalyses the reaction N-acetyl-beta-D-glucosaminyl-(1-&gt;4)-[hyaluronan](n) + UDP-alpha-D-glucuronate = [hyaluronan](n+1) + UDP + H(+). It functions in the pathway glycan biosynthesis; hyaluronan biosynthesis. Its function is as follows. Catalyzes the addition of GlcNAc or GlcUA monosaccharides to the nascent hyaluronan polymer. Therefore, it is essential to hyaluronan synthesis a major component of most extracellular matrices that has a structural role in tissues architectures and regulates cell adhesion, migration and differentiation. This is one of three isoenzymes responsible for cellular hyaluronan synthesis and it is particularly responsible for the synthesis of high molecular mass hyaluronan. The sequence is that of Hyaluronan synthase 2 (HAS2) from Gallus gallus (Chicken).